A 257-amino-acid chain; its full sequence is Ribosomal RNA small subunit methyltransferase J (257 aa).

S-adenosyl-L-methionine-binding positions include 107 to 108 (RD), 123 to 124 (ER), and Asp177.

This sequence belongs to the methyltransferase superfamily. RsmJ family.

The protein localises to the cytoplasm. It carries out the reaction guanosine(1516) in 16S rRNA + S-adenosyl-L-methionine = N(2)-methylguanosine(1516) in 16S rRNA + S-adenosyl-L-homocysteine + H(+). Functionally, specifically methylates the guanosine in position 1516 of 16S rRNA. The sequence is that of Ribosomal RNA small subunit methyltransferase J from Haemophilus influenzae (strain PittGG).